We begin with the raw amino-acid sequence, 465 residues long: Monocarboxylate transporter 4 (465 aa).

Residues 2–17 (GGAVVDEGPTGVKAPD) lie on the Cytoplasmic side of the membrane. A helical membrane pass occupies residues 18-38 (GGWGWAVLFGCFVITGFSYAF). Topologically, residues 39 to 61 (PKAVSVFFKELIQEFGIGYSDTA) are extracellular. The helical transmembrane segment at 62 to 82 (WISSILLAMLYGTGPLCSVCV) threads the bilayer. At 83-84 (NR) the chain is on the cytoplasmic side. The helical transmembrane segment at 85-105 (FGCRPVMLVGGLFASLGMVAA) threads the bilayer. At 106 to 109 (SFCR) the chain is on the extracellular side. A helical transmembrane segment spans residues 110-130 (SIIQVYLTTGVITGLGLALNF). Residues 131–149 (QPSLIMLNRYFSKRRPMAN) are Cytoplasmic-facing. A helical transmembrane segment spans residues 150–170 (GLAAAGSPVFLCALSPLGQLL). At 171-179 (QDRYGWRGG) the chain is on the extracellular side. A helical membrane pass occupies residues 180–200 (FLILGGLLLNCCVCAALMRPL). The Cytoplasmic segment spans residues 201–227 (VVTAQPGSGPPRPSRRLLDLSVFRDRG). Residues 228 to 248 (FVLYAVAASVMVLGLFVPPVF) form a helical membrane-spanning segment. At 249-264 (VVSYAKDLGVPDTKAA) the chain is on the extracellular side. A helical membrane pass occupies residues 265 to 285 (FLLTILGFIDIFARPAAGFVA). Residues 286–294 (GLGKVRPYS) are Cytoplasmic-facing. A helical transmembrane segment spans residues 295–315 (VYLFSFSMFFNGLADLAGSTA). Over 316–317 (GD) the chain is Extracellular. Residues 318–338 (YGGLVVFCIFFGISYGMVGAL) form a helical membrane-spanning segment. Over 339-351 (QFEVLMAIVGTHK) the chain is Cytoplasmic. A helical transmembrane segment spans residues 352–372 (FSSAIGLVLLMEAVAVLVGPP). The Extracellular portion of the chain corresponds to 373–384 (SGGKLLDATHVY). The chain crosses the membrane as a helical span at residues 385–405 (MYVFILAGAEVLTSSLILLLG). At 406 to 465 (NFFCIRKKPKEPQPEVAAAEEEKLHKPPADSGVDLREVEHFLKAEPEKNGEVVHTPETSV) the chain is on the cytoplasmic side. The segment at 419–438 (PEVAAAEEEKLHKPPADSGV) is disordered. Basolateral sorting signal stretches follow at residues 423–441 (AAEEEKLHKPPADSGVDLR) and 441–465 (REVEHFLKAEPEKNGEVVHTPETSV). Residues 425–438 (EEEKLHKPPADSGV) are compositionally biased toward basic and acidic residues. S436 is modified (phosphoserine). T460 bears the Phosphothreonine mark. S464 bears the Phosphoserine mark.

The protein belongs to the major facilitator superfamily. Monocarboxylate porter (TC 2.A.1.13) family. In terms of assembly, interacts with BSG; interaction mediates SLC16A3 targeting to the plasma membrane. Highly expressed in skeletal muscle.

It localises to the cell membrane. The protein resides in the basolateral cell membrane. It carries out the reaction (S)-lactate(in) + H(+)(in) = (S)-lactate(out) + H(+)(out). The catalysed reaction is pyruvate(out) + H(+)(out) = pyruvate(in) + H(+)(in). Its function is as follows. Proton-dependent transporter of monocarboxylates such as L-lactate and pyruvate. Plays a predominant role in L-lactate efflux from highly glycolytic cells. This is Monocarboxylate transporter 4 (SLC16A3) from Homo sapiens (Human).